The following is a 193-amino-acid chain: MTDYLLLFVGTVLVNNFVLVKFLGLCPFMGVSKKLETAMGMGLATTFVMTLASICAWLIDTWILIPLNLIYLRTLAFILVIAVVVQFTEMVVRKTSPVLYRLLGIFLPLITTNCAVLGVALLNINLGHNFLQSALYGFSAAVGFSLVMVLFAAIRERLAVANVPAPFRGNAIALITAGLMSLAFMGFSGLVKL.

The next 6 helical transmembrane spans lie at 5–25 (LLLF…FLGL), 39–59 (MGMG…AWLI), 63–83 (ILIP…VIAV), 102–122 (LLGI…VALL), 134–154 (ALYG…FAAI), and 171–191 (AIAL…SGLV).

The protein belongs to the NqrDE/RnfAE family. In terms of assembly, the complex is composed of six subunits: RsxA, RsxB, RsxC, RsxD, RsxE and RsxG.

The protein resides in the cell inner membrane. Functionally, part of a membrane-bound complex that couples electron transfer with translocation of ions across the membrane. Required to maintain the reduced state of SoxR. The protein is Ion-translocating oxidoreductase complex subunit A of Escherichia fergusonii (strain ATCC 35469 / DSM 13698 / CCUG 18766 / IAM 14443 / JCM 21226 / LMG 7866 / NBRC 102419 / NCTC 12128 / CDC 0568-73).